The sequence spans 305 residues: MSSNDSNDTDKQHTRLDPTGVDDAYIPPEQPETKHHRFKISRDTLRDHFIAAVGEFCGTFMFLWCAYVICNVANHDVALVAAPDGSHPGQLIMIAIGFGFSVMFSIWCFAGVSGGALNPAMSLSLCLARAVSPTRCVVMWVSQIVAGMAAGGAASAMTPGEVLFANSLGLGCSRTRGLFLEMFGTAILCLTVLMTAVEKRETNFMAALPIGISLFIAHVALTAYTGTGVNPARSLGAAVAARYFPHYHWIYWIGTLLGSILAWSVWQLLQILDYTTYVTAEKAASTKEKAQKKGETSSSSAVAEV.

The tract at residues 1–34 (MSSNDSNDTDKQHTRLDPTGVDDAYIPPEQPETK) is disordered. Residues 1 to 48 (MSSNDSNDTDKQHTRLDPTGVDDAYIPPEQPETKHHRFKISRDTLRDH) lie on the Cytoplasmic side of the membrane. Residues 49–69 (FIAAVGEFCGTFMFLWCAYVI) traverse the membrane as a helical segment. Residues 70-91 (CNVANHDVALVAAPDGSHPGQL) are Extracellular-facing. The helical transmembrane segment at 92–112 (IMIAIGFGFSVMFSIWCFAGV) threads the bilayer. Topologically, residues 113–136 (SGGALNPAMSLSLCLARAVSPTRC) are cytoplasmic. Positions 118 to 120 (NPA) match the NPA 1 motif. Residues 137–157 (VVMWVSQIVAGMAAGGAASAM) traverse the membrane as a helical segment. The Extracellular segment spans residues 158-176 (TPGEVLFANSLGLGCSRTR). The helical transmembrane segment at 177-197 (GLFLEMFGTAILCLTVLMTAV) threads the bilayer. Residues 198 to 203 (EKRETN) lie on the Cytoplasmic side of the membrane. A helical transmembrane segment spans residues 204–224 (FMAALPIGISLFIAHVALTAY). Residues 225-248 (TGTGVNPARSLGAAVAARYFPHYH) lie on the Extracellular side of the membrane. The NPA 2 signature appears at 230–232 (NPA). A helical membrane pass occupies residues 249–269 (WIYWIGTLLGSILAWSVWQLL). Residues 270–305 (QILDYTTYVTAEKAASTKEKAQKKGETSSSSAVAEV) are Cytoplasmic-facing. Over residues 286–295 (TKEKAQKKGE) the composition is skewed to basic and acidic residues. The disordered stretch occupies residues 286 to 305 (TKEKAQKKGETSSSSAVAEV). A compositionally biased stretch (polar residues) spans 296 to 305 (TSSSSAVAEV).

Belongs to the MIP/aquaporin (TC 1.A.8) family.

It is found in the endoplasmic reticulum membrane. It localises to the cell membrane. Its function is as follows. Water channel required to facilitate the transport of water across membranes. Involved in sporulation, freeze tolerance and osmotolerance. Is non-functional in most laboratory strains. The sequence is that of Aquaporin-1 (AQY1) from Saccharomyces cerevisiae (strain ATCC 204508 / S288c) (Baker's yeast).